The chain runs to 384 residues: S-adenosylmethionine synthase (384 aa).

His15 contacts ATP. Asp17 contributes to the Mg(2+) binding site. A K(+)-binding site is contributed by Glu43. L-methionine contacts are provided by Glu56 and Gln99. The segment at 99 to 109 (QSPDINQGVDR) is flexible loop. ATP is bound by residues 164–166 (DAK), 230–231 (RF), Asp239, 245–246 (RK), Ala262, and Lys266. Asp239 contributes to the L-methionine binding site. Lys270 contributes to the L-methionine binding site.

The protein belongs to the AdoMet synthase family. Homotetramer; dimer of dimers. The cofactor is Mg(2+). K(+) is required as a cofactor.

The protein resides in the cytoplasm. It catalyses the reaction L-methionine + ATP + H2O = S-adenosyl-L-methionine + phosphate + diphosphate. It functions in the pathway amino-acid biosynthesis; S-adenosyl-L-methionine biosynthesis; S-adenosyl-L-methionine from L-methionine: step 1/1. Its function is as follows. Catalyzes the formation of S-adenosylmethionine (AdoMet) from methionine and ATP. The overall synthetic reaction is composed of two sequential steps, AdoMet formation and the subsequent tripolyphosphate hydrolysis which occurs prior to release of AdoMet from the enzyme. This is S-adenosylmethionine synthase from Salmonella gallinarum (strain 287/91 / NCTC 13346).